We begin with the raw amino-acid sequence, 501 residues long: Armadillo repeat-containing protein 6 (501 aa).

The residue at position 64 (Ser64) is a Phosphoserine. ARM repeat units follow at residues Gly220–Asn264, Lys274–Gly318, Leu319–Gly369, and Thr370–Gly412. A Pros-methylhistidine modification is found at His263.

The protein belongs to the ARMC6 family. Post-translationally, methylated at His-263 by METTL9.

The sequence is that of Armadillo repeat-containing protein 6 (ARMC6) from Homo sapiens (Human).